Reading from the N-terminus, the 413-residue chain is uncharacterized protein (413 aa).

The protein belongs to the mycobacterial PPE family.

This is an uncharacterized protein from Mycobacterium tuberculosis (strain CDC 1551 / Oshkosh).